Here is a 126-residue protein sequence, read N- to C-terminus: Large ribosomal subunit protein bL12 (126 aa).

Belongs to the bacterial ribosomal protein bL12 family. Homodimer. Part of the ribosomal stalk of the 50S ribosomal subunit. Forms a multimeric L10(L12)X complex, where L10 forms an elongated spine to which 2 to 4 L12 dimers bind in a sequential fashion. Binds GTP-bound translation factors.

In terms of biological role, forms part of the ribosomal stalk which helps the ribosome interact with GTP-bound translation factors. Is thus essential for accurate translation. This chain is Large ribosomal subunit protein bL12, found in Bifidobacterium longum subsp. infantis (strain ATCC 15697 / DSM 20088 / JCM 1222 / NCTC 11817 / S12).